A 133-amino-acid chain; its full sequence is Large ribosomal subunit protein eL32z (133 aa).

It belongs to the eukaryotic ribosomal protein eL32 family.

This chain is Large ribosomal subunit protein eL32z (RPL32A), found in Arabidopsis thaliana (Mouse-ear cress).